A 232-amino-acid polypeptide reads, in one-letter code: Phosphoglycolate phosphatase (232 aa).

Asp8 serves as the catalytic Nucleophile. Asp8 and Asp10 together coordinate Mg(2+). Lys156 provides a ligand contact to substrate. Mg(2+)-binding residues include Asp179 and Asp183.

This sequence belongs to the archaeal SPP-like hydrolase family. It depends on Mg(2+) as a cofactor.

It carries out the reaction 2-phosphoglycolate + H2O = glycolate + phosphate. Catalyzes the dephosphorylation of 2-phosphoglycolate. The protein is Phosphoglycolate phosphatase of Methanopyrus kandleri (strain AV19 / DSM 6324 / JCM 9639 / NBRC 100938).